The primary structure comprises 53 residues: Light-harvesting protein B-800/820 alpha chain (53 aa).

The Cytoplasmic portion of the chain corresponds to 1-14 (MNQGKIWTVVNPAV). The helical transmembrane segment at 15 to 35 (GLPLLLGSVAITALLVHLAVL) threads the bilayer. His-31 is a binding site for a bacteriochlorophyll. The Periplasmic portion of the chain corresponds to 36–53 (THTTWFPAFTQGGLKKAA).

The protein belongs to the antenna complex alpha subunit family. The core complex is formed by different alpha and beta chains, binding bacteriochlorophyll molecules, and arranged most probably in tetrameric structures disposed around the reaction center. The non-pigmented gamma chains may constitute additional components.

Its subcellular location is the cell inner membrane. Its function is as follows. Antenna complexes are light-harvesting systems, which transfer the excitation energy to the reaction centers. In Rhodoblastus acidophilus (Rhodopseudomonas acidophila), this protein is Light-harvesting protein B-800/820 alpha chain.